The chain runs to 511 residues: MAAAKTEMLLPALQISDPLSFPHSPTDNYPKLEEMIMLNSAGTPFLNATAPEGAVFGSGEPGEQFDHLAGDTLSEISMEKPLSDQTYSTQRLPPISYTGRFTLEPATNCSNSLWAEPLFSLVSGLVGINPPPASIPSSTSQATHPSSSSTSSIPSSSSSSTSSASLSCSVHQSEPNPIYSAAPTYSSASPDIFPESGPNFSTTVGTSLQYSSSTYPSAKTCNPSFSVPMIPDYLFTQQQSEISLVPPDQKPIQTQAGQQPALTPLHTIKAFATQTGSQDLKSVYQSQLIKPSRMRKYPNRPSKTPPHERPYACPVETCDRRFSRSDELTRHIRIHTGQKPFQCRICMRNFSRSDHLTTHIRTHTGEKPFACEICGRKFARSDERKRHTKIHMRQKDKKAEKGATAAVQSSVSNISISASSPVSSYPSPITSYPSPVSSFPSPVNSCYSSPVHTSYPSPSIATTYPSATSTFQTQVATSFPTSVASNIYSSPVTTPLPDMQSALSPRTADIC.

2 disordered regions span residues 133–169 (ASIP…LSCS) and 291–312 (PSRM…RPYA). Low complexity predominate over residues 137-169 (SSTSQATHPSSSSTSSIPSSSSSSTSSASLSCS). 3 consecutive C2H2-type zinc fingers follow at residues 311–335 (YACP…IRIH), 341–363 (FQCR…IRTH), and 369–391 (FACE…TKIH). Residues 384-406 (RKRHTKIHMRQKDKKAEKGATAA) form a disordered region. The span at 386–396 (RHTKIHMRQKD) shows a compositional bias: basic residues.

Belongs to the EGR C2H2-type zinc-finger protein family. In terms of tissue distribution, detected in muscle and brain.

Its subcellular location is the nucleus. The protein resides in the cytoplasm. Functionally, transcriptional regulator. Recognizes and binds to the DNA sequence 5'-GCG(T/G)GGGCG-3'(EGR-site) in the promoter region of target genes. Binds double-stranded target DNA, irrespective of the cytosine methylation status. Regulates the transcription of numerous target genes, and thereby plays an important role in regulating the response to growth factors, DNA damage, and ischemia. Plays a role in the regulation of cell survival, proliferation and cell death. Mediates responses to ischemia and hypoxia; regulates the expression of proteins that are involved in inflammatory processes. Plays a role in regulating the expression of circadian clock genes. Plays a role in the organization of Muller glia cells in the inner and outer plexiform layers of the retina. In Danio rerio (Zebrafish), this protein is Early growth response protein 1 (egr1).